The sequence spans 299 residues: Ribosomal protein L11 methyltransferase (299 aa).

Residues Thr-150, Gly-171, Asp-193, and Asn-234 each coordinate S-adenosyl-L-methionine.

Belongs to the methyltransferase superfamily. PrmA family.

The protein localises to the cytoplasm. It catalyses the reaction L-lysyl-[protein] + 3 S-adenosyl-L-methionine = N(6),N(6),N(6)-trimethyl-L-lysyl-[protein] + 3 S-adenosyl-L-homocysteine + 3 H(+). Methylates ribosomal protein L11. The polypeptide is Ribosomal protein L11 methyltransferase (Dictyoglomus turgidum (strain DSM 6724 / Z-1310)).